Reading from the N-terminus, the 386-residue chain is Heat-inducible transcription repressor HrcA (386 aa).

This sequence belongs to the HrcA family.

In terms of biological role, negative regulator of class I heat shock genes (grpE-dnaK-dnaJ and groELS operons). Prevents heat-shock induction of these operons. This Chlamydia felis (strain Fe/C-56) (Chlamydophila felis) protein is Heat-inducible transcription repressor HrcA.